Here is a 225-residue protein sequence, read N- to C-terminus: Single-pass membrane and coiled-coil domain-containing protein 3 (225 aa).

Residues Ile-62–Glu-92 are a coiled coil. A helical transmembrane segment spans residues Ile-155–Ile-175. Residues Val-183–Glu-207 are a coiled coil.

Its subcellular location is the membrane. The chain is Single-pass membrane and coiled-coil domain-containing protein 3 (SMCO3) from Homo sapiens (Human).